The chain runs to 362 residues: Ferrochelatase (362 aa).

The Fe cation site is built by His-212 and Glu-294.

It belongs to the ferrochelatase family.

It is found in the cytoplasm. It carries out the reaction heme b + 2 H(+) = protoporphyrin IX + Fe(2+). It functions in the pathway porphyrin-containing compound metabolism; protoheme biosynthesis; protoheme from protoporphyrin-IX: step 1/1. In terms of biological role, catalyzes the ferrous insertion into protoporphyrin IX. The protein is Ferrochelatase of Leptospira biflexa serovar Patoc (strain Patoc 1 / Ames).